Consider the following 160-residue polypeptide: uncharacterized protein (160 aa).

This is an uncharacterized protein from Magallana gigas (Pacific oyster).